The chain runs to 846 residues: DNA mismatch repair protein MutS (846 aa).

Gly610–Ser617 provides a ligand contact to ATP.

The protein belongs to the DNA mismatch repair MutS family.

Functionally, this protein is involved in the repair of mismatches in DNA. It is possible that it carries out the mismatch recognition step. This protein has a weak ATPase activity. The sequence is that of DNA mismatch repair protein MutS from Legionella pneumophila (strain Paris).